The sequence spans 278 residues: 4-deoxy-L-threo-5-hexosulose-uronate ketol-isomerase (278 aa).

4 residues coordinate Zn(2+): His-196, His-198, Glu-203, and His-245.

The protein belongs to the KduI family. Zn(2+) is required as a cofactor.

It catalyses the reaction 5-dehydro-4-deoxy-D-glucuronate = 3-deoxy-D-glycero-2,5-hexodiulosonate. The protein operates within glycan metabolism; pectin degradation; 2-dehydro-3-deoxy-D-gluconate from pectin: step 4/5. In terms of biological role, catalyzes the isomerization of 5-dehydro-4-deoxy-D-glucuronate to 3-deoxy-D-glycero-2,5-hexodiulosonate. This Yersinia pseudotuberculosis serotype O:1b (strain IP 31758) protein is 4-deoxy-L-threo-5-hexosulose-uronate ketol-isomerase.